The chain runs to 94 residues: Small ribosomal subunit protein uS19c (94 aa).

The protein belongs to the universal ribosomal protein uS19 family.

It is found in the plastid. The protein resides in the chloroplast. In terms of biological role, protein S19 forms a complex with S13 that binds strongly to the 16S ribosomal RNA. The sequence is that of Small ribosomal subunit protein uS19c (rps19) from Euglena gracilis.